The chain runs to 300 residues: Ribosomal protein L11 methyltransferase (300 aa).

The S-adenosyl-L-methionine site is built by Thr152, Gly173, Asp195, and Asn234.

Belongs to the methyltransferase superfamily. PrmA family.

The protein resides in the cytoplasm. It carries out the reaction L-lysyl-[protein] + 3 S-adenosyl-L-methionine = N(6),N(6),N(6)-trimethyl-L-lysyl-[protein] + 3 S-adenosyl-L-homocysteine + 3 H(+). In terms of biological role, methylates ribosomal protein L11. The chain is Ribosomal protein L11 methyltransferase from Paraburkholderia xenovorans (strain LB400).